The sequence spans 229 residues: Galactonate operon transcriptional repressor (229 aa).

Residues 1–71 (MTLNKTDRIV…RYRGAFVAPR (71 aa)) form the HTH gntR-type domain. Positions 31–50 (EAELCEEFATSRNIIREVFR) form a DNA-binding region, H-T-H motif. Residues aspartate 146, histidine 150, and histidine 195 each coordinate Zn(2+).

Homodimer.

With respect to regulation, D-galactonate binds DgoR and induces a conformational change in the protein, which decreases its affinity for DNA and consequently derepresses transcription of the dgoRKADT operon. Functionally, involved in the regulation of D-galactonate metabolism. Represses the expression of the dgoRKADT operon by binding to two closely spaced inverted repeats in the cis-acting element, which overlap with the D-galactonate responsive dgo promoter. Employs a derepression mechanism using D-galactonate as a specific effector molecule. This is Galactonate operon transcriptional repressor from Escherichia coli (strain K12).